A 628-amino-acid chain; its full sequence is 2-oxoacid:ferredoxin oxidoreductase 2, subunit alpha (628 aa).

The YPITP motif motif lies at 254 to 258; that stretch reads YPITP. Thr257 and Arg344 together coordinate substrate.

As to quaternary structure, heterodimer composed of an alpha and a beta subunit.

It catalyses the reaction a 2-oxocarboxylate + 2 oxidized [2Fe-2S]-[ferredoxin] + CoA = an acyl-CoA + 2 reduced [2Fe-2S]-[ferredoxin] + CO2 + H(+). In terms of biological role, catalyzes the coenzyme A-dependent oxidative decarboxylation of different 2-oxoacids such as 2-oxoglutarate, pyruvate and 2-oxobutyrate to form their CoA derivatives. In Sulfurisphaera tokodaii (strain DSM 16993 / JCM 10545 / NBRC 100140 / 7) (Sulfolobus tokodaii), this protein is 2-oxoacid:ferredoxin oxidoreductase 2, subunit alpha.